The chain runs to 211 residues: Large ribosomal subunit protein uL4 (211 aa).

Residues 52–79 (GRAEVHGSNSKPYSQKGTGRARRGDKKS) are disordered. Positions 58 to 68 (GSNSKPYSQKG) are enriched in polar residues.

Belongs to the universal ribosomal protein uL4 family. As to quaternary structure, part of the 50S ribosomal subunit.

Functionally, one of the primary rRNA binding proteins, this protein initially binds near the 5'-end of the 23S rRNA. It is important during the early stages of 50S assembly. It makes multiple contacts with different domains of the 23S rRNA in the assembled 50S subunit and ribosome. In terms of biological role, forms part of the polypeptide exit tunnel. The sequence is that of Large ribosomal subunit protein uL4 from Treponema denticola (strain ATCC 35405 / DSM 14222 / CIP 103919 / JCM 8153 / KCTC 15104).